An 834-amino-acid chain; its full sequence is Leucine--tRNA ligase (834 aa).

The 'HIGH' region motif lies at 36–46 (PYPSGKIHVGH). The 'KMSKS' region motif lies at 602 to 606 (KMSKS). K605 contacts ATP.

This sequence belongs to the class-I aminoacyl-tRNA synthetase family.

The protein localises to the cytoplasm. It catalyses the reaction tRNA(Leu) + L-leucine + ATP = L-leucyl-tRNA(Leu) + AMP + diphosphate. The sequence is that of Leucine--tRNA ligase from Rickettsia canadensis (strain McKiel).